Here is a 374-residue protein sequence, read N- to C-terminus: MSGESMNFSDVFDSSEDYFVSVNTSYYSVDSEMLLCSLQEVRQFSRLFVPIAYSLICVFGLLGNILVVITFAFYKKARSMTDVYLLNMAIADILFVLTLPFWAVSHATGAWVFSNATCKLLKGIYAINFNCGMLLLTCISMDRYIAIVQATKSFRLRSRTLPRSKIICLVVWGLSVIISSSTFVFNQKYNTQGSDVCEPKYQTVSEPIRWKLLMLGLELLFGFFIPLMFMIFCYTFIVKTLVQAQNSKRHKAIRVIIAVVLVFLACQIPHNMVLLVTAANLGKMNRSCQSEKLIGYTKTVTEVLAFLHCCLNPVLYAFIGQKFRNYFLKILKDLWCVRRKYKSSGFSCAGRYSENISRQTSETADNDNASSFTM.

At methionine 1–leucine 47 the chain is on the extracellular side. Asparagine 7 and asparagine 23 each carry an N-linked (GlcNAc...) asparagine glycan. Residues phenylalanine 48 to tyrosine 74 traverse the membrane as a helical segment. Over lysine 75 to valine 83 the chain is Cytoplasmic. Residues tyrosine 84–valine 104 traverse the membrane as a helical segment. The Extracellular portion of the chain corresponds to serine 105–lysine 119. An intrachain disulfide couples cysteine 118 to cysteine 197. A helical transmembrane segment spans residues leucine 120–methionine 141. The Cytoplasmic portion of the chain corresponds to aspartate 142–arginine 159. A helical membrane pass occupies residues threonine 160 to serine 180. Residues serine 181–lysine 211 lie on the Extracellular side of the membrane. A helical membrane pass occupies residues leucine 212 to valine 238. The Cytoplasmic portion of the chain corresponds to lysine 239–arginine 254. The helical transmembrane segment at valine 255–alanine 279 threads the bilayer. Over asparagine 280–valine 303 the chain is Extracellular. Residues leucine 304–glutamine 321 form a helical membrane-spanning segment. Topologically, residues lysine 322–methionine 374 are cytoplasmic.

The protein belongs to the G-protein coupled receptor 1 family. Sperm. Mainly localized in the tail and in the postacrosomal region but is also found in the midpiece and basal region in a small percentage of sperm cells. Reduced levels found in the sperms of asthenozoospermia and leukocytospermia patients (at protein level). Spleen, lymph nodes, appendix, and fetal liver. Expressed in lymphocytes, T-cells and B-cells but not in natural killer cells, monocytes or granulocytes.

It localises to the cell membrane. The protein resides in the cell surface. Functionally, receptor for the C-C type chemokine CCL20. Binds to CCL20 and subsequently transduces a signal by increasing the intracellular calcium ion levels. Although CCL20 is its major ligand it can also act as a receptor for non-chemokine ligands such as beta-defensins. Binds to defensin DEFB1 leading to increase in intracellular calcium ions and cAMP levels. Its binding to DEFB1 is essential for the function of DEFB1 in regulating sperm motility and bactericidal activity. Binds to defensins DEFB4 and DEFB4A/B and mediates their chemotactic effects. The ligand-receptor pair CCL20-CCR6 is responsible for the chemotaxis of dendritic cells (DC), effector/ memory T-cells and B-cells and plays an important role at skin and mucosal surfaces under homeostatic and inflammatory conditions, as well as in pathology, including cancer and various autoimmune diseases. CCR6-mediated signals are essential for immune responses to microbes in the intestinal mucosa and in the modulation of inflammatory responses initiated by tissue insult and trauma. CCR6 is essential for the recruitment of both the pro-inflammatory IL17 producing helper T-cells (Th17) and the regulatory T-cells (Treg) to sites of inflammation. Required for the normal migration of Th17 cells in Peyers-patches and other related tissue sites of the intestine and plays a role in regulating effector T-cell balance and distribution in inflamed intestine. Plays an important role in the coordination of early thymocyte precursor migration events important for normal subsequent thymocyte precursor development, but is not required for the formation of normal thymic natural regulatory T-cells (nTregs). Required for optimal differentiation of DN2 and DN3 thymocyte precursors. Essential for B-cell localization in the subepithelial dome of Peyers-patches and for efficient B-cell isotype switching to IgA in the Peyers-patches. Essential for appropriate anatomical distribution of memory B-cells in the spleen and for the secondary recall response of memory B-cells. Positively regulates sperm motility and chemotaxis via its binding to CCL20. The sequence is that of C-C chemokine receptor type 6 (CCR6) from Homo sapiens (Human).